A 543-amino-acid polypeptide reads, in one-letter code: Mannuronan C5-epimerase (543 aa).

The signal sequence occupies residues 1–35 (MPDISLSIPRRRLPRLRPLAAAVLGAVLLHGQAWA). PbH1 repeat units lie at residues 243–270 (GAEVYLSNSTFTSFGYNASKAYGISISQ), 283–304 (RPKGWVIDSTIVDSWYGFYCYE), 305–327 (ADDLVVKGNTYRDNIVYGIDPHD), 329–352 (SHRLIIADNTVHGTRKKHGIIVSR), 354–376 (VNDSFIFNNRSYENKLSGIVLDR), 378–400 (SEGNLVAYNEVYRNHSDGITLYE), and 401–423 (SGDNLLWGNQVLANRRHGIRVRN). Catalysis depends on His-326, which acts as the Proton acceptor.

The protein belongs to the D-mannuronate C5-epimerase family.

The protein resides in the periplasm. The catalysed reaction is [(1-&gt;4)-beta-D-mannuronosyl](n) = [alginate](n). The protein operates within glycan biosynthesis; alginate biosynthesis. Its activity is regulated as follows. Inhibited by the presence of acetyl groups on the substrate. Its function is as follows. Catalyzes the epimerization of beta-D-mannuronate to alpha-L-guluronate during the synthesis of the linear polysaccharide alginate. In addition, is part of a periplasmic protein complex that protects alginate from degradation by AlgL by channeling the newly formed alginate polymer through a scaffold that transfers the alginate polymer through the periplasmic space to the outer membrane secretin AlgE. The sequence is that of Mannuronan C5-epimerase from Pseudomonas aeruginosa (strain ATCC 15692 / DSM 22644 / CIP 104116 / JCM 14847 / LMG 12228 / 1C / PRS 101 / PAO1).